A 401-amino-acid polypeptide reads, in one-letter code: Beta-ketoadipyl-CoA thiolase (401 aa).

The Acyl-thioester intermediate role is filled by C91. Catalysis depends on proton acceptor residues H357 and C387.

It belongs to the thiolase-like superfamily. Thiolase family.

The enzyme catalyses succinyl-CoA + acetyl-CoA = 3-oxoadipyl-CoA + CoA. It participates in aromatic compound metabolism; beta-ketoadipate pathway; acetyl-CoA and succinyl-CoA from 3-oxoadipate: step 2/2. Functionally, catalyzes thiolytic cleavage of beta-ketoadipyl-CoA to succinyl-CoA and acetyl-CoA. This Pseudomonas aeruginosa (strain ATCC 15692 / DSM 22644 / CIP 104116 / JCM 14847 / LMG 12228 / 1C / PRS 101 / PAO1) protein is Beta-ketoadipyl-CoA thiolase (pcaF).